A 231-amino-acid chain; its full sequence is Secreted LysM effector LysM13 (231 aa).

A signal peptide spans 1 to 19; that stretch reads MVFLSLKYALSGLAATAAA. Asparagine 30, asparagine 34, asparagine 77, asparagine 100, asparagine 130, asparagine 201, and asparagine 226 each carry an N-linked (GlcNAc...) asparagine glycan. In terms of domain architecture, LysM spans 38–82; that stretch reads TTYTTTSEDTIFTVARKFDRGPCDIARYNRMIDAEHIFANFTLRI.

It belongs to the secreted LysM effector family.

Its subcellular location is the secreted. Secreted LysM effector that might have a role in sequestration of chitin oligosaccharides (breakdown products of fungal cell walls that are released during invasion and act as triggers of host immunity) to dampen host defense. This chain is Secreted LysM effector LysM13, found in Penicillium expansum (Blue mold rot fungus).